Here is a 157-residue protein sequence, read N- to C-terminus: Crossover junction endodeoxyribonuclease RuvC (157 aa).

Active-site residues include Asp7, Glu67, and Asp140. Mg(2+)-binding residues include Asp7, Glu67, and Asp140.

It belongs to the RuvC family. In terms of assembly, homodimer which binds Holliday junction (HJ) DNA. The HJ becomes 2-fold symmetrical on binding to RuvC with unstacked arms; it has a different conformation from HJ DNA in complex with RuvA. In the full resolvosome a probable DNA-RuvA(4)-RuvB(12)-RuvC(2) complex forms which resolves the HJ. It depends on Mg(2+) as a cofactor.

The protein resides in the cytoplasm. The enzyme catalyses Endonucleolytic cleavage at a junction such as a reciprocal single-stranded crossover between two homologous DNA duplexes (Holliday junction).. Functionally, the RuvA-RuvB-RuvC complex processes Holliday junction (HJ) DNA during genetic recombination and DNA repair. Endonuclease that resolves HJ intermediates. Cleaves cruciform DNA by making single-stranded nicks across the HJ at symmetrical positions within the homologous arms, yielding a 5'-phosphate and a 3'-hydroxyl group; requires a central core of homology in the junction. The consensus cleavage sequence is 5'-(A/T)TT(C/G)-3'. Cleavage occurs on the 3'-side of the TT dinucleotide at the point of strand exchange. HJ branch migration catalyzed by RuvA-RuvB allows RuvC to scan DNA until it finds its consensus sequence, where it cleaves and resolves the cruciform DNA. This chain is Crossover junction endodeoxyribonuclease RuvC, found in Rickettsia massiliae (strain Mtu5).